The chain runs to 882 residues: Protein O-mannosyl-transferase TMTC1 (882 aa).

Topologically, residues 1 to 20 are cytoplasmic; sequence MVVTTSARGGGGDRTPSRRR. The segment at 1 to 20 is disordered; the sequence is MVVTTSARGGGGDRTPSRRR. A helical membrane pass occupies residues 21 to 41; the sequence is GCGLAPAGAAALLAGASCLCY. The Extracellular portion of the chain corresponds to 42 to 110; sequence GRSLQGEFVH…KLNIFLTGMN (69 aa). N-linked (GlcNAc...) asparagine glycosylation is present at Asn-86. Residues 111 to 131 form a helical membrane-spanning segment; sequence PFYFHAVNIILHCLVTLVLMY. Residues 132–137 are Cytoplasmic-facing; sequence TCDKTV. A helical membrane pass occupies residues 138 to 157; that stretch reads FKNRGLAFVTALLFAVHPIH. Over 158-160 the chain is Extracellular; sequence TEA. A helical membrane pass occupies residues 161–181; sequence VAGIVGRADVLACLLFLLAFL. At 182-197 the chain is on the cytoplasmic side; the sequence is SYNRSLDQGCVGGSFP. Residues 198–218 form a helical membrane-spanning segment; sequence STVSPFFLLLSLFLGTCAMLV. Topologically, residues 219–221 are extracellular; that stretch reads KET. Residues 222 to 238 traverse the membrane as a helical segment; the sequence is GITVFGVCLVYDLFSLS. Over 239-313 the chain is Cytoplasmic; the sequence is NKQDKSSNGA…SPRAVWSMMR (75 aa). Residues 246-277 are disordered; it reads NGALCPRSPQQPGSPQPSSLPGHPHRENGKQQ. A compositionally biased stretch (low complexity) spans 251–267; sequence PRSPQQPGSPQPSSLPG. A helical transmembrane segment spans residues 314-334; it reads FLTYSYLLAFNVWLLLAPVTL. Residues 335-354 lie on the Extracellular side of the membrane; it reads CYDWQVGSIPLVETIWDMRN. Residues 355 to 375 form a helical membrane-spanning segment; the sequence is LATIFLAVVMALLSLHCLAAF. The Cytoplasmic portion of the chain corresponds to 376-381; it reads KRLEHK. Residues 382 to 402 form a helical membrane-spanning segment; the sequence is EVLVGLLFLVFPFIPASNLFF. Residue Arg-403 is a topological domain, extracellular. A helical membrane pass occupies residues 404–424; the sequence is VGFVVAERVLYMPSMGYCILF. Residues 425–438 lie on the Cytoplasmic side of the membrane; that stretch reads VHGLSKLCTWLNRC. Residues 439-459 form a helical membrane-spanning segment; the sequence is GATTLIVSTVLLLLLFSWKTV. Residues 460 to 882 lie on the Extracellular side of the membrane; sequence KQNEIWLSRE…LQEVREKDQT (423 aa). TPR repeat units lie at residues 483-516, 517-547, 548-581, 582-615, 616-649, 650-682, 683-716, 751-784, 789-822, and 823-856; these read AKVH…YPRH, ASAL…HPQH, NRAL…GPEF, ADAY…CPDS, SDLH…SPSH, HVAM…VAHK, AEIL…QPSQ, LECY…KPKD, SELF…NPDQ, and AQAW…VPDS.

The protein belongs to the TMTC family. As to quaternary structure, may interact with FAM168B.

The protein localises to the membrane. The protein resides in the endoplasmic reticulum. The catalysed reaction is a di-trans,poly-cis-dolichyl beta-D-mannosyl phosphate + L-seryl-[protein] = 3-O-(alpha-D-mannosyl)-L-seryl-[protein] + a di-trans,poly-cis-dolichyl phosphate + H(+). It catalyses the reaction a di-trans,poly-cis-dolichyl beta-D-mannosyl phosphate + L-threonyl-[protein] = 3-O-(alpha-D-mannosyl)-L-threonyl-[protein] + a di-trans,poly-cis-dolichyl phosphate + H(+). It participates in protein modification; protein glycosylation. Functionally, transfers mannosyl residues to the hydroxyl group of serine or threonine residues. The 4 members of the TMTC family are O-mannosyl-transferases dedicated primarily to the cadherin superfamily, each member seems to have a distinct role in decorating the cadherin domains with O-linked mannose glycans at specific regions. Also acts as O-mannosyl-transferase on other proteins such as PDIA3. The sequence is that of Protein O-mannosyl-transferase TMTC1 from Homo sapiens (Human).